Here is a 197-residue protein sequence, read N- to C-terminus: Potassium-transporting ATPase KdpC subunit (197 aa).

A helical membrane pass occupies residues 7 to 27 (PALVSMGLFTVLLGLAYPLAV).

This sequence belongs to the KdpC family. The system is composed of three essential subunits: KdpA, KdpB and KdpC.

It localises to the cell inner membrane. Part of the high-affinity ATP-driven potassium transport (or Kdp) system, which catalyzes the hydrolysis of ATP coupled with the electrogenic transport of potassium into the cytoplasm. This subunit acts as a catalytic chaperone that increases the ATP-binding affinity of the ATP-hydrolyzing subunit KdpB by the formation of a transient KdpB/KdpC/ATP ternary complex. This chain is Potassium-transporting ATPase KdpC subunit, found in Caulobacter vibrioides (strain ATCC 19089 / CIP 103742 / CB 15) (Caulobacter crescentus).